The sequence spans 599 residues: Sulfite reductase [NADPH] flavoprotein alpha-component (599 aa).

Residues Val64–Val202 enclose the Flavodoxin-like domain. FMN is bound by residues Ser70–Ala75, Ser117–Gly120, and Leu153–Cys162. Residues Asp234–Pro448 form the FAD-binding FR-type domain. FAD is bound by residues Thr322, Ala356, Arg386–Ser389, Thr404–Gly406, Tyr410, and Gly419–Ser422. NADP(+)-binding positions include Ser519–Arg520, Lys525–Gln529, and Asp561. Tyr599 serves as a coordination point for FAD.

This sequence belongs to the NADPH-dependent sulphite reductase flavoprotein subunit CysJ family. In the N-terminal section; belongs to the flavodoxin family. The protein in the C-terminal section; belongs to the flavoprotein pyridine nucleotide cytochrome reductase family. Alpha(8)-beta(8). The alpha component is a flavoprotein, the beta component is a hemoprotein. It depends on FAD as a cofactor. FMN is required as a cofactor.

It carries out the reaction hydrogen sulfide + 3 NADP(+) + 3 H2O = sulfite + 3 NADPH + 4 H(+). Its pathway is sulfur metabolism; hydrogen sulfide biosynthesis; hydrogen sulfide from sulfite (NADPH route): step 1/1. Component of the sulfite reductase complex that catalyzes the 6-electron reduction of sulfite to sulfide. This is one of several activities required for the biosynthesis of L-cysteine from sulfate. The flavoprotein component catalyzes the electron flow from NADPH -&gt; FAD -&gt; FMN to the hemoprotein component. In Salmonella typhimurium (strain LT2 / SGSC1412 / ATCC 700720), this protein is Sulfite reductase [NADPH] flavoprotein alpha-component.